Here is a 559-residue protein sequence, read N- to C-terminus: Glutamine--tRNA ligase (559 aa).

The short motif at 44-54 (PEPNGYLHIGH) is the 'HIGH' region element. ATP is bound by residues 45 to 47 (EPN) and 51 to 57 (HIGHAKS). L-glutamine contacts are provided by D77 and Y222. Residues T241 and 272–273 (RL) contribute to the ATP site. The 'KMSKS' region motif lies at 279–283 (LTSKR).

Belongs to the class-I aminoacyl-tRNA synthetase family. In terms of assembly, monomer.

Its subcellular location is the cytoplasm. It catalyses the reaction tRNA(Gln) + L-glutamine + ATP = L-glutaminyl-tRNA(Gln) + AMP + diphosphate. This Pasteurella multocida (strain Pm70) protein is Glutamine--tRNA ligase.